Reading from the N-terminus, the 400-residue chain is Involucrin (400 aa).

3 disordered regions span residues 1 to 196 (MSQQ…HLKQ), 273 to 312 (KEEV…EQQL), and 333 to 381 (KRDE…KGEV). Low complexity-rich tracts occupy residues 78 to 159 (QQQQ…QQHQ), 169 to 186 (EQQQ…GQQE), and 279 to 292 (EQQQ…QQHQ). A compositionally biased stretch (basic and acidic residues) spans 333-344 (KRDEQLGKKEEQ). The span at 346–358 (LEPSEQQEGLLEQ) shows a compositional bias: low complexity.

Belongs to the involucrin family. Directly or indirectly cross-linked to cornifelin (CNFN). Post-translationally, substrate of transglutaminase. Specific glutamines or lysines are cross-linked to keratins, desmoplakin and to inter involucrin molecules. As to expression, keratinocytes of epidermis and other stratified squamous epithelia.

It is found in the cytoplasm. Functionally, part of the insoluble cornified cell envelope (CE) of stratified squamous epithelia. The protein is Involucrin (IVL) of Tupaia glis (Common tree shrew).